The sequence spans 514 residues: M-phase inducer phosphatase 1 (514 aa).

A Phosphodegron motif is present at residues 73 to 83 (MGSSESTDSGF). Ser-75 carries the phosphoserine; by CHEK1 modification. Phosphoserine; by NEK11 is present on residues Ser-78, Ser-81, and Ser-87. Position 106 is a phosphoserine (Ser-106). Ser-123 bears the Phosphoserine; by CHEK1 and CHEK2 mark. The KEN box motif lies at 140 to 142 (KEN). Ser-172 is subject to Phosphoserine; by CHEK1. The interval 256–308 (PCGSSTRAVLKRADRSHEEPPRGTKRRKSVPSPVKAKADVPEPAQLPSQSLSL) is disordered. Basic and acidic residues predominate over residues 266 to 277 (KRADRSHEEPPR). Phosphoserine; by CHEK1 and CHEK2 is present on residues Ser-271 and Ser-284. Ser-311 is modified (phosphoserine). Residues 366 to 472 (LIKEFVIIDC…FFLKCQSHCE (107 aa)) form the Rhodanese domain. The active site involves Cys-421. A Phosphothreonine; by CHEK1 modification is found at Thr-497. A phosphoserine; by PLK3 mark is found at Ser-503 and Ser-509.

Belongs to the MPI phosphatase family. As to quaternary structure, interacts with CCNB1/cyclin B1. Interacts with YWHAE/14-3-3 epsilon when phosphorylated. Interacts with CUL1 specifically when CUL1 is neddylated and active. Interacts with BTRC/BTRCP1 and FBXW11/BTRCP2. Interactions with CUL1, BTRC and FBXW11 are enhanced upon DNA damage. Interacts with CHEK2; mediates CDC25A phosphorylation and degradation in response to infrared-induced DNA damages. Interacts with HSP90AB1; prevents heat shock-mediated CDC25A degradation and contributes to cell cycle progression. In terms of processing, phosphorylated by CHEK1 on Ser-75, Ser-123, Ser-172, Ser-271, Ser-284 and Thr-497 during checkpoint mediated cell cycle arrest. Also phosphorylated by CHEK2 on Ser-123, Ser-271, and Ser-284 during checkpoint mediated cell cycle arrest. Phosphorylation on Ser-172 and Thr-497 creates binding sites for YWHAE/14-3-3 epsilon which inhibits CDC25A. Phosphorylation on Ser-75, Ser-123, Ser-172, Ser-271 and Ser-284 may also promote ubiquitin-dependent proteolysis of CDC25A by the SCF complex. Phosphorylation of CDC25A at Ser-75 by CHEK1 primes it for subsequent phosphorylation at Ser-75, Ser-81 and Ser-87 by NEK11. Phosphorylation by NEK11 is required for BTRC-mediated polyubiquitination and degradation. Phosphorylation by PIM1 leads to an increase in phosphatase activity. Phosphorylated by PLK3 following DNA damage, leading to promote its ubiquitination and degradation. Post-translationally, ubiquitinated by the anaphase promoting complex/cyclosome (APC/C) ubiquitin ligase complex that contains FZR1/CDH1 during G1 phase leading to its degradation by the proteasome. Ubiquitinated by a SCF complex containing BTRC and FBXW11 during S phase leading to its degradation by the proteasome. Deubiquitination by USP17L2/DUB3 leads to its stabilization. As to expression, ubiquitously expressed in most developing tissue. High levels in the testis and lower levels in the ovary, particularly in germ cells. Lower levels also in kidney, liver, heart and muscle.

It carries out the reaction O-phospho-L-tyrosyl-[protein] + H2O = L-tyrosyl-[protein] + phosphate. Its activity is regulated as follows. Stimulated by B-type cyclins. Stimulated by PIM1-mediated phosphorylation. In terms of biological role, tyrosine protein phosphatase which functions as a dosage-dependent inducer of mitotic progression. Directly dephosphorylates CDK1 and stimulates its kinase activity. Also dephosphorylates CDK2 in complex with cyclin-E, in vitro. This is M-phase inducer phosphatase 1 (Cdc25a) from Mus musculus (Mouse).